The primary structure comprises 370 residues: Cyanuric acid amidohydrolase (370 aa).

The tract at residues 1–106 is RU A; the sequence is MRTTSVGVFK…TVFTRREVER (106 aa). Substrate contacts are provided by residues R54 and 85 to 86; that span reads SG. The interval 115 to 251 is RU B; that stretch reads RLSIGMAHTR…NVVIVLGNSA (137 aa). K165 is an active-site residue. Substrate-binding positions include R197 and 234–235; that span reads SA. The active-site Nucleophile is the S234. Positions 257–370 are RU C; that stretch reads FEIGHAVMND…PVAVIARLSD (114 aa). Residue E302 participates in Mg(2+) binding. Substrate contacts are provided by residues R329 and 348–349; that span reads SG. Mg(2+) is bound by residues A351, Q354, G355, P356, and G359.

This sequence belongs to the cyclic amide hydrolase (CyAH) family. In terms of assembly, homotetramer.

The enzyme catalyses cyanurate + H2O = 1-carboxybiuret + H(+). Its pathway is xenobiotic degradation; atrazine degradation; biuret from cyanurate: step 1/1. Inhibited by barbituric acid. Its function is as follows. Responsible for the hydrolysis of cyanuric acid, an intermediate formed during catabolism of s-triazine based compounds in herbicides such as atrazine and polymers such as melamine. Catalyzes the hydrolytic opening of the s-triazine ring of cyanuric acid (2,4,6-trihydroxy-s-triazine) to yield carbon dioxide and carboxybiuret, which spontaneously decarboxylates to biuret. The protein is Cyanuric acid amidohydrolase of Bradyrhizobium diazoefficiens (strain JCM 10833 / BCRC 13528 / IAM 13628 / NBRC 14792 / USDA 110).